The following is a 379-amino-acid chain: Homoserine O-succinyltransferase (379 aa).

In terms of domain architecture, AB hydrolase-1 spans 48–357 (NAVLICHALS…SAHGHDAFLM (310 aa)). Catalysis depends on Ser154, which acts as the Nucleophile. Arg224 contacts substrate. Catalysis depends on residues Asp319 and His352. Asp353 contacts substrate.

This sequence belongs to the AB hydrolase superfamily. MetX family. As to quaternary structure, homodimer.

It is found in the cytoplasm. It catalyses the reaction L-homoserine + succinyl-CoA = O-succinyl-L-homoserine + CoA. The protein operates within amino-acid biosynthesis; L-methionine biosynthesis via de novo pathway; O-succinyl-L-homoserine from L-homoserine: step 1/1. Its function is as follows. Transfers a succinyl group from succinyl-CoA to L-homoserine, forming succinyl-L-homoserine. This chain is Homoserine O-succinyltransferase, found in Neisseria meningitidis serogroup A / serotype 4A (strain DSM 15465 / Z2491).